A 665-amino-acid polypeptide reads, in one-letter code: Probable potassium transport system protein Kup 2 (665 aa).

Helical transmembrane passes span 13–33 (GLLVSIGIVYGDIGTSPLYVM), 55–75 (ISLILWTITLLTTVKYVLIAL), 98–118 (WLVLPALIGGAALLADGTLTP), 138–158 (IPVPNQNSVLIITIIILLFLF), 167–187 (IIGKTFGPIMLIWFTFLGLTG), 195–215 (LSLLEALNPVLAVKILFSPAN), 217–237 (VGVLILGAVFLATTGAEALYS), 250–270 (SWPYVFICLALNYLGQGVWIL), 295–315 (FFAIILATLAAIIASQALITG), 344–364 (IFIPSINKMLCAATIGIVFLF), 375–395 (GLAITVTMLMTTILLFEYLSL), 400–420 (ILLRLVFLFLFGAIESMFLIS), and 428–448 (GGYVTVIIAAFIGAIMYIWYF).

The protein belongs to the HAK/KUP transporter (TC 2.A.72) family.

Its subcellular location is the cell membrane. It catalyses the reaction K(+)(in) + H(+)(in) = K(+)(out) + H(+)(out). In terms of biological role, transport of potassium into the cell. Likely operates as a K(+):H(+) symporter. The polypeptide is Probable potassium transport system protein Kup 2 (Lactobacillus johnsonii (strain CNCM I-12250 / La1 / NCC 533)).